The primary structure comprises 227 residues: Protein GrpE (227 aa).

Positions 1 to 18 (MTQGNQKTEGNPPEQVTV) are enriched in polar residues. Disordered regions lie at residues 1 to 57 (MTQG…GAAT) and 193 to 227 (TEEG…ASGD). Over residues 19 to 35 (TDKRRIDPETGEVRHVP) the composition is skewed to basic and acidic residues. Low complexity-rich tracts occupy residues 41–50 (GGTAPQAATA) and 199–213 (EAAA…AAET).

It belongs to the GrpE family. Homodimer.

The protein resides in the cytoplasm. Participates actively in the response to hyperosmotic and heat shock by preventing the aggregation of stress-denatured proteins, in association with DnaK and GrpE. It is the nucleotide exchange factor for DnaK and may function as a thermosensor. Unfolded proteins bind initially to DnaJ; upon interaction with the DnaJ-bound protein, DnaK hydrolyzes its bound ATP, resulting in the formation of a stable complex. GrpE releases ADP from DnaK; ATP binding to DnaK triggers the release of the substrate protein, thus completing the reaction cycle. Several rounds of ATP-dependent interactions between DnaJ, DnaK and GrpE are required for fully efficient folding. The protein is Protein GrpE of Mycolicibacterium paratuberculosis (strain ATCC BAA-968 / K-10) (Mycobacterium paratuberculosis).